Here is a 512-residue protein sequence, read N- to C-terminus: MDTTAVASKGSTNVGSSTDTLSTSASLHPSMNAGSVNEYSEQQRHGTNSFNGKPSVHDSVGSDASVSNGHNNHNESSLWTSGIPKALEEATKSKKPDSLVSTSTSGCASAHSVGYQNIDNLIPSPLPESASRSSSQSSHQRHSRDGRGELGSEHGERRSAMDGLRDRHIRKVRVSQLLDLQRRRIRPADHTTKDRYGIQDFNFLQTLGTGSFGRVHLVQSNHNRLYYAIKVLEKKKIVDMKQIEHTCDERYILSRVQHPFITILWGTFQDAKNLFMVMDFAEGGELFSLLRKCHRFPEKVAKFYAAEVILALDYLHHNQIVYRDLKPENLLLDRFGHLKIVDFGFAKRVSTSNCCTLCGTPDYLAPEIISLKPYNKAADWWSLGILIFEMLAGYPPFYSENPMKLYENILEGKVNYPSYFSPASIDLLSHLLQRDITCRYGNLKDGSMDIIMHPWFRDISWDKILTRKIEVPYVPPIQAGMGDSSQFDAYADVATDYGTSEDPEFTSIFKDF.

Over residues 1-15 (MDTTAVASKGSTNVG) the composition is skewed to polar residues. 2 disordered regions span residues 1–79 (MDTT…SSLW) and 118–166 (IDNL…GLRD). The segment covering 16–27 (SSTDTLSTSASL) has biased composition (low complexity). 2 stretches are compositionally biased toward polar residues: residues 32-52 (NAGSVNEYSEQQRHGTNSFNG) and 62-79 (SDASVSNGHNNHNESSLW). Residues 143–166 (SRDGRGELGSEHGERRSAMDGLRD) show a composition bias toward basic and acidic residues. The region spanning 201-456 (FNFLQTLGTG…SMDIIMHPWF (256 aa)) is the Protein kinase domain. Residues 207-215 (LGTGSFGRV) and K230 each bind ATP. Residue D324 is the Proton acceptor of the active site. Position 356 is a phosphothreonine (T356). The AGC-kinase C-terminal domain occupies 457–512 (RDISWDKILTRKIEVPYVPPIQAGMGDSSQFDAYADVATDYGTSEDPEFTSIFKDF).

This sequence belongs to the protein kinase superfamily. AGC Ser/Thr protein kinase family. cAMP subfamily.

The enzyme catalyses L-seryl-[protein] + ATP = O-phospho-L-seryl-[protein] + ADP + H(+). It catalyses the reaction L-threonyl-[protein] + ATP = O-phospho-L-threonyl-[protein] + ADP + H(+). Its activity is regulated as follows. Activated by cAMP. The polypeptide is cAMP-dependent protein kinase catalytic subunit (pka1) (Schizosaccharomyces pombe (strain 972 / ATCC 24843) (Fission yeast)).